Consider the following 171-residue polypeptide: MKFYTISSKYIEYLKEFDDKVPNSEDPTYQNPKAFIGIVLEIQGHKYLAPLTSPKKWHNNVKESSLSCFKLHENGVPENQLGLINLKFMIPIIEAEVSLLDLGNMPNTPYKRMLYKQLQFIRANSDKIASKSDTLRNLVLQGKMQGTCNFSLLEEKYRDFGKEAEDTEEGE.

This sequence belongs to the ToxN/AbiQ toxin family. As to quaternary structure, one ToxN monomer binds to a 36-nt-long single repeat of the ToxI RNA; this complex forms a triangular heterohexameric complex with ToxN connected by the ToxI RNA to another toxin molecule. The ToxI repeat forms a pseudoknot which occludes the toxin active site. Interaction of ToxI with ToxN partially inhibits the latter's endoribonuclease activity in vitro. The complex self-assembles in vitro with either full-length or processed single repeats; during the process the precursor is processed.

Toxic component of a type III toxin-antitoxin (TA) system. An endoribonuclease which is active independently of the ribosome, cleaving between the second and third A of AAA(U/G) sequences, although not all occurrences of this tetranucleotide are cleaved. Digests many mRNA species, including its own transcript and its cognate antitoxin RNA ToxI. ToxI has 5.5 nearly identical 36 nucleotide-long repeats (a single repeat neutralizes the toxin in vivo); a single repeat folds into a pseudoknot which binds the toxin. The ToxI precursor RNA is a preferential target in vivo and is progressively degraded to single repeat lengths as ToxN-ToxI complex self-assembly occurs. In vivo expression of ToxI antitoxin inhibits endonuclease activity of ToxN. The toxin alone inhibits growth when expressed in E.coli without causing cell lysis; this bacteriostatic effect is neutralized by cognate RNA antitoxin ToxI. Non-cognate antitoxin RNA from B.thuringiensis does not inhibit this toxin. The RNA antitoxin is less stable than the proteinaceous toxin; synthesis of ToxI in the absence of new ToxN synthesis restores growth and also detectable accumulation of the ToxN protein. Negatively regulates its own operon in complex with ToxI. The toxin-antitoxin system functions in plasmid maintenance (a plasmid addiction system). Functionally, the TA system protects P.atrosepticum strain 1043 against phage phiM1 and phiA2, E.coli against some but not all coliphages and S.marcescens against some bacteriophages, causing an abortive infection (Abi phenotype). Also protects P.atrosepticum strain 1043 against phage phiTE; phage that escape Abi and grow in this bacterium have evolved a pseudo-ToxI RNA by expanding a pre-existing sequence similar to the bona fide ToxI repeats. This Pectobacterium atrosepticum (Erwinia carotovora subsp. atroseptica) protein is Endoribonuclease ToxN.